A 170-amino-acid polypeptide reads, in one-letter code: Protein BofC (170 aa).

The N-terminal stretch at 1-30 (MKRFSTAYLLLGILCSAAVFLIGAPSRALG) is a signal peptide.

Monomer.

The protein localises to the forespore intermembrane space. In terms of biological role, inhibits the SpoIVB zymogen from undergoing autocatalytic activation by an unknown mechanism, and in this way plays a role in the sigma-K checkpoint of sporulation. The protein is Protein BofC (bofC) of Bacillus subtilis (strain 168).